A 446-amino-acid chain; its full sequence is Tubulin beta chain (446 aa).

8 residues coordinate GTP: Gln11, Glu69, Ser138, Gly142, Thr143, Gly144, Asn204, and Asn226. Glu69 serves as a coordination point for Mg(2+). A disordered region spans residues 427 to 446; sequence EAGVDEGEEFEEEEDFGDEQ. Positions 429–446 are enriched in acidic residues; that stretch reads GVDEGEEFEEEEDFGDEQ.

Belongs to the tubulin family. Dimer of alpha and beta chains. A typical microtubule is a hollow water-filled tube with an outer diameter of 25 nm and an inner diameter of 15 nM. Alpha-beta heterodimers associate head-to-tail to form protofilaments running lengthwise along the microtubule wall with the beta-tubulin subunit facing the microtubule plus end conferring a structural polarity. Microtubules usually have 13 protofilaments but different protofilament numbers can be found in some organisms and specialized cells. The cofactor is Mg(2+).

It localises to the cytoplasm. It is found in the cytoskeleton. Its function is as follows. Tubulin is the major constituent of microtubules, a cylinder consisting of laterally associated linear protofilaments composed of alpha- and beta-tubulin heterodimers. Microtubules grow by the addition of GTP-tubulin dimers to the microtubule end, where a stabilizing cap forms. Below the cap, tubulin dimers are in GDP-bound state, owing to GTPase activity of alpha-tubulin. The polypeptide is Tubulin beta chain (Giardia intestinalis (Giardia lamblia)).